A 244-amino-acid chain; its full sequence is WUSCHEL-related homeobox 3 (244 aa).

Residues 4 to 68 (VASTRWCPTP…NHKARDRQKL (65 aa)) constitute a DNA-binding region (homeobox; WUS-type).

Belongs to the WUS homeobox family. Expressed in aerial parts of seedlings, inflorescences and flowers at low level. Expressed in a restricted number of L1 cells at the lateral regions of flower primordia.

The protein resides in the nucleus. Functionally, probable transcription factor required to initiate organ founder cells in a lateral domain of shoot meristems. Involved in the lateral sepal axis-dependent development of flowers, probably by regulating the proliferation of L1 cells at the lateral region of flower primordia. Required for the formation of the margin cells of the first and second whorl organs. This Arabidopsis thaliana (Mouse-ear cress) protein is WUSCHEL-related homeobox 3 (WOX3).